A 153-amino-acid polypeptide reads, in one-letter code: UPF0251 protein Daud_0090 (153 aa).

Residues 129–138 (ELMTRPERCS) show a composition bias toward basic and acidic residues. Residues 129-153 (ELMTRPERCSRPKRGAGKYRVPKKR) are disordered. Positions 139–153 (RPKRGAGKYRVPKKR) are enriched in basic residues.

The protein belongs to the UPF0251 family.

The chain is UPF0251 protein Daud_0090 from Desulforudis audaxviator (strain MP104C).